Reading from the N-terminus, the 829-residue chain is Protein SEY1 homolog 2 (829 aa).

Residues 1–21 (MDEVSPTKHFTSKPLLPTKTP) are disordered. The Cytoplasmic portion of the chain corresponds to 1–728 (MDEVSPTKHF…EKENSEIKYQ (728 aa)). The GB1/RHD3-type G domain maps to 83–305 (GMDYNAVGIL…FLPQYNKEIP (223 aa)). Residue 93–100 (GAQSSGKS) participates in GTP binding. 2 coiled-coil regions span residues 372–396 (KKIM…YMES) and 576–596 (DTIE…IKEL). The helical transmembrane segment at 729-749 (IPLYLIVLVIFFGFDEFIAIL) threads the bilayer. Over 750-752 (TNP) the chain is Lumenal. A helical transmembrane segment spans residues 753-773 (LLFILTLIIGGGIYIGYKLNL). Residues 774-829 (GGVAKNYIQYLLSMSLSSTMEYLRTIPFFTPLIDKIWPKDDNKDDDSTEETQEETK) lie on the Cytoplasmic side of the membrane.

This sequence belongs to the TRAFAC class dynamin-like GTPase superfamily. GB1/RHD3 GTPase family. RHD3 subfamily.

The protein localises to the endoplasmic reticulum membrane. Its function is as follows. Probable GTP-binding protein that may be involved in cell development. The polypeptide is Protein SEY1 homolog 2 (Entamoeba dispar (strain ATCC PRA-260 / SAW760)).